The sequence spans 421 residues: Testin (421 aa).

Positions 92–199 constitute a PET domain; the sequence is MILTNPVAAK…GDVKLPYEMG (108 aa). The interval 133–164 is disordered; sequence EKQPVAGSEGAQYRKKQLAKQLPAHDQDPSKC. The segment covering 155-164 has biased composition (basic and acidic residues); sequence PAHDQDPSKC. LIM zinc-binding domains lie at 234–297, 299–359, and 362–421; these read YFCY…CDSE, PRCA…NHAV, and QGCH…KMMS.

This sequence belongs to the prickle / espinas / testin family. In terms of assembly, interacts via LIM domain 1 with ZYX. Interacts (via LIM domain 3) with ENAH and VASP. Interacts with ALKBH4, talin, actin, alpha-actinin, GRIP1 and PXN. Interacts (via LIM domain 2) with ACTL7A (via N-terminus). Heterodimer with ACTL7A; the heterodimer interacts with ENAH to form a heterotrimer.

The protein localises to the cytoplasm. Its subcellular location is the cell junction. It localises to the focal adhesion. In terms of biological role, scaffold protein that may play a role in cell adhesion, cell spreading and in the reorganization of the actin cytoskeleton. Plays a role in the regulation of cell proliferation. May act as a tumor suppressor. This chain is Testin (TES), found in Oryctolagus cuniculus (Rabbit).